Consider the following 224-residue polypeptide: Phosphoribosyltransferase domain-containing protein 1 (224 aa).

The Mg(2+) site is built by Glu-140 and Asp-141. GMP is bound by residues 140 to 148, Lys-172, 193 to 194, and Asp-200; these read EDIINTGRT and FV. Asp-200 is a Mg(2+) binding site.

It belongs to the purine/pyrimidine phosphoribosyltransferase family.

This is Phosphoribosyltransferase domain-containing protein 1 (prtfdc1) from Xenopus laevis (African clawed frog).